Consider the following 398-residue polypeptide: Putative tyrosine-protein phosphatase C15H7.3 (398 aa).

Basic residues predominate over residues 1–15; that stretch reads MERSQKSARKKKKTS. Residues 1 to 114 form a disordered region; it reads MERSQKSARK…EPWSEEEPAK (114 aa). Basic and acidic residues predominate over residues 18-40; the sequence is GNDRSIRSERKSKQKKPAGEKSQ. Residues 41 to 50 show a composition bias toward basic residues; sequence KSRRTRKSRG. Positions 55–73 are enriched in polar residues; the sequence is GFTSRETIQPSSSGQSEGT. Positions 74–114 are enriched in basic and acidic residues; it reads TRMDDQKDEKKDDKKEEKKEERKEEKKEEVKEPWSEEEPAK. One can recognise a Tyrosine-protein phosphatase domain in the interval 125–376; the sequence is TNVGGTFKQT…GTVHRSMACW (252 aa).

This sequence belongs to the protein-tyrosine phosphatase family. Non-receptor class subfamily.

The enzyme catalyses O-phospho-L-tyrosyl-[protein] + H2O = L-tyrosyl-[protein] + phosphate. This is Putative tyrosine-protein phosphatase C15H7.3 from Caenorhabditis elegans.